Here is a 96-residue protein sequence, read N- to C-terminus: Protein Vpr (96 aa).

The interval 1–42 is homooligomerization; it reads MEQAPEDQGPQREPYNEWTLELLEELKNEAVRHFPRIWLHSL. Residues Ser79, Ser94, and Ser96 each carry the phosphoserine; by host modification.

The protein belongs to the HIV-1 VPR protein family. In terms of assembly, homooligomer, may form homodimer. Interacts with p6-gag region of the Pr55 Gag precursor protein through a (Leu-X-X)4 motif near the C-terminus of the P6gag protein. Interacts with host UNG. May interact with host RAD23A/HHR23A. Interacts with host VPRBP/DCAF1, leading to hijack the CUL4A-RBX1-DDB1-DCAF1/VPRBP complex, mediating ubiquitination of host proteins such as TERT and ZGPAT and arrest of the cell cycle in G2 phase. Post-translationally, phosphorylated on several residues by host. These phosphorylations regulate VPR activity for the nuclear import of the HIV-1 pre-integration complex.

The protein resides in the virion. Its subcellular location is the host nucleus. It localises to the host extracellular space. Its function is as follows. During virus replication, may deplete host UNG protein, and incude G2-M cell cycle arrest. Acts by targeting specific host proteins for degradation by the 26S proteasome, through association with the cellular CUL4A-DDB1 E3 ligase complex by direct interaction with host VPRPB/DCAF-1. Cell cycle arrest reportedly occurs within hours of infection and is not blocked by antiviral agents, suggesting that it is initiated by the VPR carried into the virion. Additionally, VPR induces apoptosis in a cell cycle dependent manner suggesting that these two effects are mechanistically linked. Detected in the serum and cerebrospinal fluid of AIDS patient, VPR may also induce cell death to bystander cells. During virus entry, plays a role in the transport of the viral pre-integration (PIC) complex to the host nucleus. This function is crucial for viral infection of non-dividing macrophages. May act directly at the nuclear pore complex, by binding nucleoporins phenylalanine-glycine (FG)-repeat regions. This Homo sapiens (Human) protein is Protein Vpr.